A 328-amino-acid polypeptide reads, in one-letter code: Reticulocalbin-3 (328 aa).

A signal peptide spans 1-20 (MMWRPSVLLLLLLLRHGAQG). Positions 19–49 (QGKPSPDAGPHGQGRVHQAAPLSDAPHDDAH) are disordered. EF-hand domains follow at residues 75–112 (ESQA…TQQR), 113–148 (HIRD…HYAP), 163–198 (KMLA…EEFP), 200–235 (MRDI…AEPG), 241–276 (WVQT…PAQD), and 277–312 (QPLV…FVGS). Residues aspartate 92, aspartate 94, tryptophan 96, glutamate 101, aspartate 126, aspartate 128, aspartate 130, arginine 132, and glutamate 137 each coordinate Ca(2+). Asparagine 140 is a glycosylation site (N-linked (GlcNAc...) asparagine). Ca(2+)-binding residues include aspartate 176, aspartate 178, aspartate 180, methionine 182, glutamate 187, aspartate 213, asparagine 215, aspartate 217, tyrosine 219, glutamate 224, aspartate 254, asparagine 256, aspartate 258, histidine 260, glutamate 265, aspartate 290, aspartate 292, aspartate 294, arginine 296, and glutamate 301. The Prevents secretion from ER signature appears at 325–328 (HDEL).

This sequence belongs to the CREC family. As to quaternary structure, interacts with PCSK6 (immature form including the propeptide); probably involved in the maturation and the secretion of PCSK6. In terms of processing, degraded by PCSK6 and other endoproteases including FURIN and PCSK5. Post-translationally, N-glycosylated. As to expression, widely expressed.

It localises to the endoplasmic reticulum lumen. Probable molecular chaperone assisting protein biosynthesis and transport in the endoplasmic reticulum. Required for the proper biosynthesis and transport of pulmonary surfactant-associated protein A/SP-A, pulmonary surfactant-associated protein D/SP-D and the lipid transporter ABCA3. By regulating both the proper expression and the degradation through the endoplasmic reticulum-associated protein degradation pathway of these proteins plays a crucial role in pulmonary surfactant homeostasis. Has an anti-fibrotic activity by negatively regulating the secretion of type I and type III collagens. This calcium-binding protein also transiently associates with immature PCSK6 and regulates its secretion. In Homo sapiens (Human), this protein is Reticulocalbin-3.